A 212-amino-acid polypeptide reads, in one-letter code: Thymidylate kinase (212 aa).

10 to 17 (GIDGCGKT) contributes to the ATP binding site.

The protein belongs to the thymidylate kinase family.

The catalysed reaction is dTMP + ATP = dTDP + ADP. In terms of biological role, phosphorylation of dTMP to form dTDP in both de novo and salvage pathways of dTTP synthesis. This Prochlorococcus marinus (strain MIT 9312) protein is Thymidylate kinase.